A 144-amino-acid chain; its full sequence is Large ribosomal subunit protein uL15 (144 aa).

A disordered region spans residues 1-56 (MELNNLKPAAGAKHAKRRVGRGIGSGLGKTAGRGHKGQKSRSGGFHKVGFEGGQMP). Residues 21-31 (RGIGSGLGKTA) are compositionally biased toward gly residues.

Belongs to the universal ribosomal protein uL15 family. Part of the 50S ribosomal subunit.

Functionally, binds to the 23S rRNA. This is Large ribosomal subunit protein uL15 from Burkholderia cenocepacia (strain HI2424).